Reading from the N-terminus, the 304-residue chain is Glyceraldehyde-3-phosphate dehydrogenase 2 (304 aa).

NAD(+) contacts are provided by residues 1–2 (RI), D22, and R67. Residues 138–140 (SCT), T169, 198–199 (TG), and R221 each bind D-glyceraldehyde 3-phosphate. C139 serves as the catalytic Nucleophile. N303 provides a ligand contact to NAD(+).

Belongs to the glyceraldehyde-3-phosphate dehydrogenase family. Homotetramer.

The protein resides in the cytoplasm. The enzyme catalyses D-glyceraldehyde 3-phosphate + phosphate + NAD(+) = (2R)-3-phospho-glyceroyl phosphate + NADH + H(+). Its pathway is carbohydrate degradation; glycolysis; pyruvate from D-glyceraldehyde 3-phosphate: step 1/5. The chain is Glyceraldehyde-3-phosphate dehydrogenase 2 (Gapdh2) from Drosophila subobscura (Fruit fly).